Here is a 92-residue protein sequence, read N- to C-terminus: Small ribosomal subunit protein uS19 (92 aa).

This sequence belongs to the universal ribosomal protein uS19 family.

Functionally, protein S19 forms a complex with S13 that binds strongly to the 16S ribosomal RNA. The polypeptide is Small ribosomal subunit protein uS19 (Leptospira biflexa serovar Patoc (strain Patoc 1 / Ames)).